Reading from the N-terminus, the 528-residue chain is NAD(P)H-quinone oxidoreductase chain 4 1 (528 aa).

14 helical membrane passes run 7 to 27 (FPWL…IPLI), 32 to 52 (WVRW…AYVF), 86 to 106 (LSLP…VAAW), 114 to 134 (LFFF…LAQD), 136 to 156 (LLFF…ISIW), 168 to 188 (FILY…AMAF), 208 to 228 (ALEL…LPIF), 242 to 262 (SAPI…YGLI), 276 to 296 (FAPV…LAAF), 310 to 330 (IAHM…GING), 331 to 351 (AVLQ…LTGI), 375 to 395 (FALF…SGFV), 417 to 437 (GIAL…LSML), and 463 to 483 (MAVA…PRLA).

It belongs to the complex I subunit 4 family.

The protein resides in the cellular thylakoid membrane. It catalyses the reaction a plastoquinone + NADH + (n+1) H(+)(in) = a plastoquinol + NAD(+) + n H(+)(out). It carries out the reaction a plastoquinone + NADPH + (n+1) H(+)(in) = a plastoquinol + NADP(+) + n H(+)(out). Functionally, NDH-1 shuttles electrons from NAD(P)H, via FMN and iron-sulfur (Fe-S) centers, to quinones in the respiratory chain. The immediate electron acceptor for the enzyme in this species is believed to be plastoquinone. Couples the redox reaction to proton translocation (for every two electrons transferred, four hydrogen ions are translocated across the cytoplasmic membrane), and thus conserves the redox energy in a proton gradient. The sequence is that of NAD(P)H-quinone oxidoreductase chain 4 1 from Synechococcus sp. (strain JA-2-3B'a(2-13)) (Cyanobacteria bacterium Yellowstone B-Prime).